Reading from the N-terminus, the 391-residue chain is Matrix metalloproteinase-23 (391 aa).

Over 1–18 (MGCRACLRPEASGAVQGR) the chain is Cytoplasmic. A propeptide spanning residues 1 to 79 (MGCRACLRPE…LTMSVTRRRR (79 aa)) is cleaved from the precursor. A helical membrane pass occupies residues 19-39 (WLGAALSGLCLLSALALLEWL). The Lumenal segment spans residues 40–391 (GAPTETAWRA…TYSWRVRVRN (352 aa)). N-linked (GlcNAc...) asparagine glycosylation is found at asparagine 93 and asparagine 149. Residue histidine 212 participates in Zn(2+) binding. The active site involves glutamate 213. Zn(2+) contacts are provided by histidine 216 and histidine 222. The N-linked (GlcNAc...) asparagine glycan is linked to asparagine 233. The 35-residue stretch at 256 to 290 (CLDRIFVCASWARKGFCDVRQRLMKRLCPRSCDFC) folds into the ShKT domain. Intrachain disulfides connect cysteine 256/cysteine 290, cysteine 263/cysteine 283, and cysteine 272/cysteine 287. The 86-residue stretch at 298-383 (VATTTSPTRT…RRHQRVLSTY (86 aa)) folds into the Ig-like C2-type domain. Asparagine 317 carries N-linked (GlcNAc...) asparagine glycosylation. A disulfide bond links cysteine 322 and cysteine 371.

Belongs to the peptidase M10A family. Zn(2+) is required as a cofactor. In terms of processing, N-glycosylated. Post-translationally, proteolytic cleavage might yield an active form. Expressed at relatively high level in heart, lung and spleen. Not detected in brain, liver, skeletal muscle, kidney and testis.

It is found in the endoplasmic reticulum membrane. Its subcellular location is the membrane. Its activity is regulated as follows. Inhibited by TIMP2. Functionally, protease. May regulate the surface expression of some potassium channels by retaining them in the endoplasmic reticulum. The protein is Matrix metalloproteinase-23 (Mmp23) of Mus musculus (Mouse).